The sequence spans 103 residues: Histone H4 (103 aa).

Gly residues predominate over residues 1–14 (MSGRGKGGKGLGKG). A disordered region spans residues 1–20 (MSGRGKGGKGLGKGGAKRHR). Residue Ser2 is modified to N-acetylserine. Residues Lys6 and Lys13 each carry the N6-acetyl-N6-methyllysine; alternate modification. Lys17 carries the post-translational modification N6-acetyllysine. A DNA-binding region spans residues 17 to 21 (KRHRK). Lys21 bears the N6-methyllysine mark.

It belongs to the histone H4 family. The nucleosome is a histone octamer containing two molecules each of H2A, H2B, H3 and H4 assembled in one H3-H4 heterotetramer and two H2A-H2B heterodimers. The octamer wraps approximately 147 bp of DNA.

It localises to the nucleus. Its subcellular location is the chromosome. Its function is as follows. Core component of nucleosome. Nucleosomes wrap and compact DNA into chromatin, limiting DNA accessibility to the cellular machineries which require DNA as a template. Histones thereby play a central role in transcription regulation, DNA repair, DNA replication and chromosomal stability. DNA accessibility is regulated via a complex set of post-translational modifications of histones, also called histone code, and nucleosome remodeling. The protein is Histone H4 of Ascaris suum (Pig roundworm).